The sequence spans 856 residues: Histone-lysine N-methyltransferase EZA1 (856 aa).

Residues 1–11 (MVTDDSNSSGR) show a composition bias toward polar residues. Disordered stretches follow at residues 1–34 (MVTDDSNSSGRIKSHVDDDDDGEEEEDRLEGLEN), 66–87 (VSPFSSAASSRATAEDNGNSNM), and 366–473 (NVDS…HHGS). The segment covering 17–28 (DDDDDGEEEEDR) has biased composition (acidic residues). The stretch at 22 to 49 (GEEEEDRLEGLENRLSELKRKIQGERVR) forms a coiled coil. Polar residues predominate over residues 68 to 87 (PFSSAASSRATAEDNGNSNM). Residues 374 to 392 (EQEHGIRGKREVPILKDSN) show a composition bias toward basic and acidic residues. Over residues 393 to 419 (DLPNLSNKKQKTAASDTKMSFVNSVPS) the composition is skewed to polar residues. Positions 438–451 (KVNRDSEADAKEVG) are enriched in basic and acidic residues. The SANT domain occupies 489-539 (PSTEWNPIEKDLYLKGVEIFGRNSCLIARNLLSGLKTCLDVSNYMRENEVS). One can recognise a CXC domain in the interval 594-693 (WKRIAGGKNQ…SLGEAPRRGE (100 aa)). Positions 707-822 (QRILLGKSDV…ASEELFYDYR (116 aa)) constitute an SET domain. Y821 provides a ligand contact to S-adenosyl-L-methionine. The segment at 827 to 856 (QAPVWARKPEGSKKDDSAITHRRARKHQSH) is disordered. Residues 833–845 (RKPEGSKKDDSAI) show a composition bias toward basic and acidic residues. A Nuclear localization signal motif is present at residues 838–845 (SKKDDSAI). Over residues 846 to 856 (THRRARKHQSH) the composition is skewed to basic residues.

The protein belongs to the class V-like SAM-binding methyltransferase superfamily. Histone-lysine methyltransferase family. EZ subfamily. Component of the plant homeodomain / polycomb repressive complex 2 (PHD-PRC2) large complex during prolonged cold, composed of core PRC2 components (VRN2, EZA1, FIE and MSI1), and three related PHD finger proteins (VIL1, VIL2 and VIN3) that mediates histone H3 trimethylation on 'Lys-27' H3K27me3. Interacts with TAF13. Interacts with EOL1. Interacts (via SANT domain) with HXK1 in the nucleus.

Its subcellular location is the nucleus. The catalysed reaction is L-lysyl(27)-[histone H3] + 3 S-adenosyl-L-methionine = N(6),N(6),N(6)-trimethyl-L-lysyl(27)-[histone H3] + 3 S-adenosyl-L-homocysteine + 3 H(+). Polycomb group (PcG) protein. Catalytic subunit of some PcG multiprotein complex, which methylates 'Lys-27' of histone H3, leading to transcriptional repression of the affected target genes, mainly abscisic acid (ABA) responsive elements. PcG proteins act by forming multiprotein complexes, which are required to maintain the transcriptionally repressive state of homeotic genes throughout development. PcG proteins are not required to initiate repression, but to maintain it during later stages of development. Forms a nuclear complex with CLF and HXK1 to target common glucose-responsive genes and regulate glucose signaling by glucose-mediated gene repression. Affects the recruitment of HXK1 to the target chromatin. The polypeptide is Histone-lysine N-methyltransferase EZA1 (Arabidopsis thaliana (Mouse-ear cress)).